The chain runs to 291 residues: Lipoyl synthase (291 aa).

The [4Fe-4S] cluster site is built by Cys-43, Cys-48, Cys-54, Cys-69, Cys-73, Cys-76, and Ser-280. The Radical SAM core domain maps to Phe-55–Pro-269.

This sequence belongs to the radical SAM superfamily. Lipoyl synthase family. It depends on [4Fe-4S] cluster as a cofactor.

The protein localises to the cytoplasm. The enzyme catalyses [[Fe-S] cluster scaffold protein carrying a second [4Fe-4S](2+) cluster] + N(6)-octanoyl-L-lysyl-[protein] + 2 oxidized [2Fe-2S]-[ferredoxin] + 2 S-adenosyl-L-methionine + 4 H(+) = [[Fe-S] cluster scaffold protein] + N(6)-[(R)-dihydrolipoyl]-L-lysyl-[protein] + 4 Fe(3+) + 2 hydrogen sulfide + 2 5'-deoxyadenosine + 2 L-methionine + 2 reduced [2Fe-2S]-[ferredoxin]. It participates in protein modification; protein lipoylation via endogenous pathway; protein N(6)-(lipoyl)lysine from octanoyl-[acyl-carrier-protein]: step 2/2. In terms of biological role, catalyzes the radical-mediated insertion of two sulfur atoms into the C-6 and C-8 positions of the octanoyl moiety bound to the lipoyl domains of lipoate-dependent enzymes, thereby converting the octanoylated domains into lipoylated derivatives. This Oleidesulfovibrio alaskensis (strain ATCC BAA-1058 / DSM 17464 / G20) (Desulfovibrio alaskensis) protein is Lipoyl synthase.